Consider the following 242-residue polypeptide: Alpha-aspartyl dipeptidase (242 aa).

Catalysis depends on charge relay system residues Ser125, Asp140, and His162.

Belongs to the peptidase S51 family.

The protein localises to the cytoplasm. It carries out the reaction Dipeptidase E catalyzes the hydrolysis of dipeptides Asp-|-Xaa. It does not act on peptides with N-terminal Glu, Asn or Gln, nor does it cleave isoaspartyl peptides.. Hydrolyzes dipeptides containing N-terminal aspartate residues. The protein is Alpha-aspartyl dipeptidase (aad-a) of Xenopus laevis (African clawed frog).